Here is a 196-residue protein sequence, read N- to C-terminus: Crossover junction endodeoxyribonuclease RuvC (196 aa).

Catalysis depends on residues Asp-19, Glu-80, and Asp-153. The Mg(2+) site is built by Asp-19, Glu-80, and Asp-153.

This sequence belongs to the RuvC family. As to quaternary structure, homodimer which binds Holliday junction (HJ) DNA. The HJ becomes 2-fold symmetrical on binding to RuvC with unstacked arms; it has a different conformation from HJ DNA in complex with RuvA. In the full resolvosome a probable DNA-RuvA(4)-RuvB(12)-RuvC(2) complex forms which resolves the HJ. Requires Mg(2+) as cofactor.

The protein localises to the cytoplasm. It catalyses the reaction Endonucleolytic cleavage at a junction such as a reciprocal single-stranded crossover between two homologous DNA duplexes (Holliday junction).. Its function is as follows. The RuvA-RuvB-RuvC complex processes Holliday junction (HJ) DNA during genetic recombination and DNA repair. Endonuclease that resolves HJ intermediates. Cleaves cruciform DNA by making single-stranded nicks across the HJ at symmetrical positions within the homologous arms, yielding a 5'-phosphate and a 3'-hydroxyl group; requires a central core of homology in the junction. The consensus cleavage sequence is 5'-(A/T)TT(C/G)-3'. Cleavage occurs on the 3'-side of the TT dinucleotide at the point of strand exchange. HJ branch migration catalyzed by RuvA-RuvB allows RuvC to scan DNA until it finds its consensus sequence, where it cleaves and resolves the cruciform DNA. The protein is Crossover junction endodeoxyribonuclease RuvC of Cutibacterium acnes (strain DSM 16379 / KPA171202) (Propionibacterium acnes).